Consider the following 363-residue polypeptide: MTSELKKTPLYQNYVDSGAKIVEFGGWAMPVQFTSIKEEHNAVRYEVGMFDVSHMGEISIKGNDASKFVQYLLSNDTNNLTDTKAQYTALCNEEGGIIDDLVTYKIGDNDYLLIVNAANTDKDFAWVQKHAPKFDVEVSNVSNQFGQLAVQGPKARDLVSGLVDIDVSEMKPFDFQQNVTLFGKNVILSQSGYTGEDGFEIYCEAKDTVDIWNGFIEHNVVPCGLGARDTLRLEAGLPLHGQDLTESITPYEGGIAFAAKPLIEEDFIGKSVLKDQKENGSERRTVGLELLDKGIARTGYPVLDLDGNEIGEVTSGTQAPSSGKSIAMAIIKRDEFEMGRELLVQVRKRQLKAKIVKKNQIEK.

Belongs to the GcvT family. In terms of assembly, the glycine cleavage system is composed of four proteins: P, T, L and H.

It catalyses the reaction N(6)-[(R)-S(8)-aminomethyldihydrolipoyl]-L-lysyl-[protein] + (6S)-5,6,7,8-tetrahydrofolate = N(6)-[(R)-dihydrolipoyl]-L-lysyl-[protein] + (6R)-5,10-methylene-5,6,7,8-tetrahydrofolate + NH4(+). Functionally, the glycine cleavage system catalyzes the degradation of glycine. The polypeptide is Aminomethyltransferase (Staphylococcus haemolyticus (strain JCSC1435)).